The primary structure comprises 662 residues: UvrABC system protein B (662 aa).

The 158-residue stretch at 25-182 (KGIEKGEKFQ…KKLVEIQYER (158 aa)) folds into the Helicase ATP-binding domain. 38–45 (GVTGSGKT) provides a ligand contact to ATP. Residues 91–114 (YYDYYQPEAYVAQSDTYIEKDASI) carry the Beta-hairpin motif. The Helicase C-terminal domain maps to 429–595 (QIDDLYTSIQ…TIIKDIREVI (167 aa)). The 36-residue stretch at 622–657 (DKLIEKYEEEMKEAAQNLQFEKAAHLRDVIYKLKRD) folds into the UVR domain.

This sequence belongs to the UvrB family. Forms a heterotetramer with UvrA during the search for lesions. Interacts with UvrC in an incision complex.

Its subcellular location is the cytoplasm. Functionally, the UvrABC repair system catalyzes the recognition and processing of DNA lesions. A damage recognition complex composed of 2 UvrA and 2 UvrB subunits scans DNA for abnormalities. Upon binding of the UvrA(2)B(2) complex to a putative damaged site, the DNA wraps around one UvrB monomer. DNA wrap is dependent on ATP binding by UvrB and probably causes local melting of the DNA helix, facilitating insertion of UvrB beta-hairpin between the DNA strands. Then UvrB probes one DNA strand for the presence of a lesion. If a lesion is found the UvrA subunits dissociate and the UvrB-DNA preincision complex is formed. This complex is subsequently bound by UvrC and the second UvrB is released. If no lesion is found, the DNA wraps around the other UvrB subunit that will check the other stand for damage. The chain is UvrABC system protein B from Clostridium botulinum (strain Loch Maree / Type A3).